The following is a 467-amino-acid chain: Asparagine--tRNA ligase (467 aa).

This sequence belongs to the class-II aminoacyl-tRNA synthetase family. In terms of assembly, homodimer.

The protein localises to the cytoplasm. The catalysed reaction is tRNA(Asn) + L-asparagine + ATP = L-asparaginyl-tRNA(Asn) + AMP + diphosphate + H(+). The sequence is that of Asparagine--tRNA ligase from Actinobacillus pleuropneumoniae serotype 3 (strain JL03).